The following is a 493-amino-acid chain: Guanosine-5'-triphosphate,3'-diphosphate pyrophosphatase (493 aa).

The protein belongs to the GppA/Ppx family. GppA subfamily.

The enzyme catalyses guanosine 3'-diphosphate 5'-triphosphate + H2O = guanosine 3',5'-bis(diphosphate) + phosphate + H(+). The protein operates within purine metabolism; ppGpp biosynthesis; ppGpp from GTP: step 2/2. In terms of biological role, catalyzes the conversion of pppGpp to ppGpp. Guanosine pentaphosphate (pppGpp) is a cytoplasmic signaling molecule which together with ppGpp controls the 'stringent response', an adaptive process that allows bacteria to respond to amino acid starvation, resulting in the coordinated regulation of numerous cellular activities. In Salmonella gallinarum (strain 287/91 / NCTC 13346), this protein is Guanosine-5'-triphosphate,3'-diphosphate pyrophosphatase.